A 437-amino-acid polypeptide reads, in one-letter code: MLMRLYTFFAAALLACCAAAGPLHPELPQLVGKSWIPDWWFPFPRPSTRAATTTTTPATSTTGLATTTTKPTTTSSKPVTPTPQPATSTAQPAISSTANATATATASSASTSTTSSSTSASTSTSAAAPSTPTTVVPFGQVIRSCTVKGTVAITFDDGPYDYTNKLLDIFDANGAKATLFVNAQNFGSITDYSSVMLRAFNTGHQIASHTYDHADLSTLNGAGIISEMTKLDDVLATITNGYRPTYMRVPYFAYSPLVLQTMADLKYHVIEADIDTKDYEHDTPDGVSVSVGFFRDGLNAGGSIALAHDVHQTTVDLLIQQLLDEVKRRGLKAVTVGECLGDPRANWYRTTPVQVPTGTSTTSPTATPTSPGTPPPAPTQPGVASNCQKWHTVVSGDTCYDIAAANGISLDNLYKWNPAVGTSCASLWLGYAVCVGV.

The first 20 residues, 1–20 (MLMRLYTFFAAALLACCAAA), serve as a signal peptide directing secretion. The disordered stretch occupies residues 47–132 (STRAATTTTT…STSAAAPSTP (86 aa)). N-linked (GlcNAc...) asparagine glycosylation occurs at N99. Residues 149–334 (GTVAITFDDG…EVKRRGLKAV (186 aa)) form the NodB homology domain. D156 (proton acceptor) is an active-site residue. The Zn(2+) site is built by D157, H209, and H213. Y251 provides a ligand contact to substrate. H308 (proton donor) is an active-site residue. Over residues 350 to 370 (TTPVQVPTGTSTTSPTATPTS) the composition is skewed to low complexity. Residues 350 to 384 (TTPVQVPTGTSTTSPTATPTSPGTPPPAPTQPGVA) form a disordered region. In terms of domain architecture, LysM spans 389 to 435 (KWHTVVSGDTCYDIAAANGISLDNLYKWNPAVGTSCASLWLGYAVCV).

Zn(2+) is required as a cofactor. Requires Co(2+) as cofactor.

The protein localises to the secreted. The catalysed reaction is peptidoglycan-N-acetyl-D-glucosamine + H2O = peptidoglycan-D-glucosamine + acetate.. Its function is as follows. Catalyzes the deacetylation of N-acetylglucosamine (GlcNAc) residues in peptidoglycan. In Arthroderma benhamiae (strain ATCC MYA-4681 / CBS 112371) (Trichophyton mentagrophytes), this protein is Probable peptidoglycan-N-acetylglucosamine deacetylase ARB_03699.